A 42-amino-acid polypeptide reads, in one-letter code: Cytochrome b559 subunit beta (42 aa).

The helical transmembrane segment at 17–33 threads the bilayer; it reads WLAIHGLAVPTVFFLGA. Position 21 (H21) interacts with heme.

It belongs to the PsbE/PsbF family. Heterodimer of an alpha subunit and a beta subunit. PSII is composed of 1 copy each of membrane proteins PsbA, PsbB, PsbC, PsbD, PsbE, PsbF, PsbH, PsbI, PsbJ, PsbK, PsbL, PsbM, PsbT, PsbX, PsbY, PsbZ, Psb30/Ycf12, at least 3 peripheral proteins of the oxygen-evolving complex and a large number of cofactors. It forms dimeric complexes. Heme b is required as a cofactor.

It is found in the plastid. The protein localises to the chloroplast thylakoid membrane. In terms of biological role, this b-type cytochrome is tightly associated with the reaction center of photosystem II (PSII). PSII is a light-driven water:plastoquinone oxidoreductase that uses light energy to abstract electrons from H(2)O, generating O(2) and a proton gradient subsequently used for ATP formation. It consists of a core antenna complex that captures photons, and an electron transfer chain that converts photonic excitation into a charge separation. The sequence is that of Cytochrome b559 subunit beta from Guillardia theta (Cryptophyte).